Here is a 243-residue protein sequence, read N- to C-terminus: MKLVVGLGNPGPRYAGNRHNVGFMAVAALARRHGIGPFRRKFQAQVADGQIAGARLLLLAPETFMNASGQAVGEAARFHKIAPEDIIVLHDELDLAPGKIKVKQGGGAGGHNGIRDIEAHLGPAFWRVRLGIGHPGHKDRVLTYVLGDFAKAEEDWLAPMLDAVADHFALMLEGRPADFMSKVAAQTRPAEKAKPLATAKPKEGEARTSGGSVAEVGAPPPSPTGLAAALAEALDRKSQKGNG.

Y14 lines the tRNA pocket. H19 (proton acceptor) is an active-site residue. Residues F64, N66, and N112 each contribute to the tRNA site. The segment at 184–225 (AAQTRPAEKAKPLATAKPKEGEARTSGGSVAEVGAPPPSPTG) is disordered. Positions 189 to 206 (PAEKAKPLATAKPKEGEA) are enriched in basic and acidic residues.

It belongs to the PTH family. As to quaternary structure, monomer.

It is found in the cytoplasm. The catalysed reaction is an N-acyl-L-alpha-aminoacyl-tRNA + H2O = an N-acyl-L-amino acid + a tRNA + H(+). Its function is as follows. Hydrolyzes ribosome-free peptidyl-tRNAs (with 1 or more amino acids incorporated), which drop off the ribosome during protein synthesis, or as a result of ribosome stalling. Functionally, catalyzes the release of premature peptidyl moieties from peptidyl-tRNA molecules trapped in stalled 50S ribosomal subunits, and thus maintains levels of free tRNAs and 50S ribosomes. In Rhodospirillum rubrum (strain ATCC 11170 / ATH 1.1.1 / DSM 467 / LMG 4362 / NCIMB 8255 / S1), this protein is Peptidyl-tRNA hydrolase.